The sequence spans 406 residues: S-adenosylmethionine synthase (406 aa).

Residue His17 coordinates ATP. Asp19 provides a ligand contact to Mg(2+). Glu45 provides a ligand contact to K(+). The L-methionine site is built by Glu58 and Gln101. Residues Gln101–Arg111 form a flexible loop region. Residues Asp178–Lys180, Asp258, Arg264–Lys265, Ala281, and Lys285 each bind ATP. Asp258 contributes to the L-methionine binding site. Residue Lys289 coordinates L-methionine.

This sequence belongs to the AdoMet synthase family. As to quaternary structure, homotetramer; dimer of dimers. Mg(2+) serves as cofactor. The cofactor is K(+).

It localises to the cytoplasm. The enzyme catalyses L-methionine + ATP + H2O = S-adenosyl-L-methionine + phosphate + diphosphate. Its pathway is amino-acid biosynthesis; S-adenosyl-L-methionine biosynthesis; S-adenosyl-L-methionine from L-methionine: step 1/1. Catalyzes the formation of S-adenosylmethionine (AdoMet) from methionine and ATP. The overall synthetic reaction is composed of two sequential steps, AdoMet formation and the subsequent tripolyphosphate hydrolysis which occurs prior to release of AdoMet from the enzyme. This is S-adenosylmethionine synthase from Bifidobacterium longum subsp. infantis (strain ATCC 15697 / DSM 20088 / JCM 1222 / NCTC 11817 / S12).